The sequence spans 162 residues: NADH-quinone oxidoreductase subunit I 2 (162 aa).

4Fe-4S ferredoxin-type domains follow at residues 52-82 (LRRY…IEAG) and 93-122 (ERYD…EGPN). [4Fe-4S] cluster is bound by residues cysteine 62, cysteine 65, cysteine 68, cysteine 72, cysteine 102, cysteine 105, cysteine 108, and cysteine 112.

This sequence belongs to the complex I 23 kDa subunit family. NDH-1 is composed of 14 different subunits. Subunits NuoA, H, J, K, L, M, N constitute the membrane sector of the complex. The cofactor is [4Fe-4S] cluster.

The protein localises to the cell inner membrane. The enzyme catalyses a quinone + NADH + 5 H(+)(in) = a quinol + NAD(+) + 4 H(+)(out). NDH-1 shuttles electrons from NADH, via FMN and iron-sulfur (Fe-S) centers, to quinones in the respiratory chain. The immediate electron acceptor for the enzyme in this species is believed to be ubiquinone. Couples the redox reaction to proton translocation (for every two electrons transferred, four hydrogen ions are translocated across the cytoplasmic membrane), and thus conserves the redox energy in a proton gradient. This Rhodopseudomonas palustris (strain BisA53) protein is NADH-quinone oxidoreductase subunit I 2.